Consider the following 659-residue polypeptide: Crossover junction endonuclease MUS81 (659 aa).

A Helix-hairpin-helix motif 1 motif is present at residues 59–78; sequence KDLSQIKGFGKWMVKLMKGY. The 100-residue stretch at 404 to 503 folds into the ERCC4 domain; it reads ILILDDREKF…KKLIYILEGD (100 aa). The Helix-hairpin-helix motif 2 signature appears at 585–622; the sequence is TISDVFAIQLMQVPQVTEEIAIAVLDMYPTLLSLASAY.

It belongs to the XPF family. In terms of assembly, forms a heterodimer with EME1A or EME1B. Mg(2+) is required as a cofactor. The cofactor is Ca(2+). Ubiquitous but preferentially expressed in young flowers buds, notably in anthers.

Its subcellular location is the nucleus. The protein resides in the nucleolus. In terms of biological role, interacts with EME1 to form a DNA structure-specific endonuclease with substrate preference for branched DNA structures with a 5'-end at the branch nick. Typical substrates include 3'-flap structures, D-loops, replication forks, nicked Holliday junctions and also intact Holliday junctions with a reduced efficiency. May be required in mitosis for the processing of stalled or collapsed replication fork intermediates. Plays a role in DNA repair and in genotoxic stress-induced homologous recombination (HR) in somatic cells. Mediates a subset of meiotic recombination events that are insensitive to crossover interference. Together with SEND1, essential for the resolution of toxic replication structures to ensure genome stability, and to maintain telomere integrity and replication. The chain is Crossover junction endonuclease MUS81 from Arabidopsis thaliana (Mouse-ear cress).